The primary structure comprises 461 residues: tRNA modification GTPase MnmE (461 aa).

(6S)-5-formyl-5,6,7,8-tetrahydrofolate is bound by residues Arg22, Glu87, and Arg126. In terms of domain architecture, TrmE-type G spans 222-382 (GITAVIAGKP…LENKLYEILI (161 aa)). Residue Asn232 participates in K(+) binding. GTP-binding positions include 232 to 237 (NVGKSS), 251 to 257 (TDIPGTT), 276 to 279 (DTAG), and 363 to 365 (SAR). Ser236 contacts Mg(2+). The K(+) site is built by Thr251, Ile253, and Thr256. Thr257 is a Mg(2+) binding site. Lys461 is a (6S)-5-formyl-5,6,7,8-tetrahydrofolate binding site.

The protein belongs to the TRAFAC class TrmE-Era-EngA-EngB-Septin-like GTPase superfamily. TrmE GTPase family. Homodimer. Heterotetramer of two MnmE and two MnmG subunits. Requires K(+) as cofactor.

The protein localises to the cytoplasm. Functionally, exhibits a very high intrinsic GTPase hydrolysis rate. Involved in the addition of a carboxymethylaminomethyl (cmnm) group at the wobble position (U34) of certain tRNAs, forming tRNA-cmnm(5)s(2)U34. This Carboxydothermus hydrogenoformans (strain ATCC BAA-161 / DSM 6008 / Z-2901) protein is tRNA modification GTPase MnmE.